Consider the following 249-residue polypeptide: Tryptophan synthase alpha chain (249 aa).

Residues E43 and D54 each act as proton acceptor in the active site.

It belongs to the TrpA family. In terms of assembly, tetramer of two alpha and two beta chains.

It carries out the reaction (1S,2R)-1-C-(indol-3-yl)glycerol 3-phosphate + L-serine = D-glyceraldehyde 3-phosphate + L-tryptophan + H2O. It participates in amino-acid biosynthesis; L-tryptophan biosynthesis; L-tryptophan from chorismate: step 5/5. In terms of biological role, the alpha subunit is responsible for the aldol cleavage of indoleglycerol phosphate to indole and glyceraldehyde 3-phosphate. The sequence is that of Tryptophan synthase alpha chain from Campylobacter jejuni subsp. doylei (strain ATCC BAA-1458 / RM4099 / 269.97).